A 140-amino-acid polypeptide reads, in one-letter code: Small ribosomal subunit protein bS6 (140 aa).

The segment at 96 to 140 (VTGQSEMLKAEENRSERRERRDRPEHEGADSADSDDSDNSDNADE) is disordered. The span at 103–124 (LKAEENRSERRERRDRPEHEGA) shows a compositional bias: basic and acidic residues. The segment covering 125 to 140 (DSADSDDSDNSDNADE) has biased composition (acidic residues).

It belongs to the bacterial ribosomal protein bS6 family.

Functionally, binds together with bS18 to 16S ribosomal RNA. The protein is Small ribosomal subunit protein bS6 of Pseudomonas fluorescens (strain SBW25).